We begin with the raw amino-acid sequence, 214 residues long: Adenylate kinase (214 aa).

Position 10–15 (10–15) interacts with ATP; sequence GAGKGT. Residues 30–59 form an NMP region; it reads STGDMFRDHKARGTEIGKQVQAIMDAGGLV. AMP is bound by residues Thr-31, Arg-36, 57–59, 85–88, and Gln-92; these read GLV and GYPR. Positions 126-163 are LID; that stretch reads GRRSCPRCGAVYHVSQNPPHRAGFCDRDDTALVQREDD. Arg-127 is a binding site for ATP. Zn(2+)-binding residues include Cys-130 and Cys-133. 136 to 137 contributes to the ATP binding site; the sequence is VY. 2 residues coordinate Zn(2+): Cys-150 and Asp-153. 2 residues coordinate AMP: Arg-160 and Arg-171. Gly-199 is a binding site for ATP.

Belongs to the adenylate kinase family. In terms of assembly, monomer.

Its subcellular location is the cytoplasm. It catalyses the reaction AMP + ATP = 2 ADP. The protein operates within purine metabolism; AMP biosynthesis via salvage pathway; AMP from ADP: step 1/1. In terms of biological role, catalyzes the reversible transfer of the terminal phosphate group between ATP and AMP. Plays an important role in cellular energy homeostasis and in adenine nucleotide metabolism. In Anaeromyxobacter sp. (strain K), this protein is Adenylate kinase.